We begin with the raw amino-acid sequence, 445 residues long: Argininosuccinate synthase (445 aa).

Residues 17-25 and A43 each bind ATP; that span reads AFSGGLDTS. Y99 provides a ligand contact to L-citrulline. Residues G129 and T131 each coordinate ATP. Residues T131, N135, and D136 each coordinate L-aspartate. N135 contacts L-citrulline. An ATP-binding site is contributed by D136. L-citrulline-binding residues include R139 and S192. ATP is bound at residue D194. L-citrulline contacts are provided by T201, E203, and E280.

It belongs to the argininosuccinate synthase family. Type 2 subfamily. Homotetramer.

The protein localises to the cytoplasm. The enzyme catalyses L-citrulline + L-aspartate + ATP = 2-(N(omega)-L-arginino)succinate + AMP + diphosphate + H(+). Its pathway is amino-acid biosynthesis; L-arginine biosynthesis; L-arginine from L-ornithine and carbamoyl phosphate: step 2/3. This is Argininosuccinate synthase from Herminiimonas arsenicoxydans.